We begin with the raw amino-acid sequence, 335 residues long: Acetyl-coenzyme A carboxylase carboxyl transferase subunit alpha (335 aa).

One can recognise a CoA carboxyltransferase C-terminal domain in the interval 40–294; the sequence is QLETLATRRR…KASIERHLSE (255 aa).

Belongs to the AccA family. As to quaternary structure, acetyl-CoA carboxylase is a heterohexamer composed of biotin carboxyl carrier protein (AccB), biotin carboxylase (AccC) and two subunits each of ACCase subunit alpha (AccA) and ACCase subunit beta (AccD).

Its subcellular location is the cytoplasm. The enzyme catalyses N(6)-carboxybiotinyl-L-lysyl-[protein] + acetyl-CoA = N(6)-biotinyl-L-lysyl-[protein] + malonyl-CoA. Its pathway is lipid metabolism; malonyl-CoA biosynthesis; malonyl-CoA from acetyl-CoA: step 1/1. Its function is as follows. Component of the acetyl coenzyme A carboxylase (ACC) complex. First, biotin carboxylase catalyzes the carboxylation of biotin on its carrier protein (BCCP) and then the CO(2) group is transferred by the carboxyltransferase to acetyl-CoA to form malonyl-CoA. The protein is Acetyl-coenzyme A carboxylase carboxyl transferase subunit alpha of Prochlorococcus marinus (strain MIT 9515).